The following is a 256-amino-acid chain: Hemin import ATP-binding protein HmuV (256 aa).

The region spanning 2–238 (ISAQNLVYSL…QALTMLYGAD (237 aa)) is the ABC transporter domain. 34–41 (GPNGAGKS) provides a ligand contact to ATP.

The protein belongs to the ABC transporter superfamily. Heme (hemin) importer (TC 3.A.1.14.5) family. The complex is composed of two ATP-binding proteins (HmuV), two transmembrane proteins (HmuU) and a solute-binding protein (HmuT).

It localises to the cell inner membrane. In terms of biological role, part of the ABC transporter complex HmuTUV involved in hemin import. Responsible for energy coupling to the transport system. The sequence is that of Hemin import ATP-binding protein HmuV from Escherichia coli O157:H7.